Here is a 647-residue protein sequence, read N- to C-terminus: Threonine--tRNA ligase (647 aa).

The region spanning 1–63 (MDKINITFPD…EEDGSIEIVT (63 aa)) is the TGS domain. Positions 242-540 (DHRKIGKELD…LTEETKGAFP (299 aa)) are catalytic. Zn(2+)-binding residues include cysteine 336, histidine 387, and histidine 517.

The protein belongs to the class-II aminoacyl-tRNA synthetase family. As to quaternary structure, homodimer. It depends on Zn(2+) as a cofactor.

The protein localises to the cytoplasm. The catalysed reaction is tRNA(Thr) + L-threonine + ATP = L-threonyl-tRNA(Thr) + AMP + diphosphate + H(+). Functionally, catalyzes the attachment of threonine to tRNA(Thr) in a two-step reaction: L-threonine is first activated by ATP to form Thr-AMP and then transferred to the acceptor end of tRNA(Thr). Also edits incorrectly charged L-seryl-tRNA(Thr). This is Threonine--tRNA ligase from Staphylococcus carnosus (strain TM300).